The primary structure comprises 497 residues: MTSLTQFEQLKTAGYNTIPVYRQRLADTDTPLSVFARLKDYTQAYLFESVEGGENWARYSIIGLGESTVFSCNAGQLTIKNAQGNITTQSCADPFQYIRDYQSQFKVPPHALIPDLPQFTGGLVGYFGYDAVRYIEPRLSNVPEADPVGLPDIWMMLSKTVIIFDNLKDTLFLIVHANTTDEEAYQRAQNQLDYLERLLATPVSLQAKKHKAPHFESLTGKEKFLESVETVKEYIRAGDVMQVVPGHRMVSDFDGDPLQVYRALRHLNPSPYLFLVQGHTLTDNTPFHIVGSSPEILSRLEDGIATVRPLAGTRPRGKTKEEDLALEQELLADEKEIAEHLMLIDLGRNDVGRVSKIGKVQVTDRMVIERYSHVMHIVSNVQGEVRDDIDALDVFKATFPAGTLSGAPKIRAMEIIDEVEPVKRGIFGGAVGYLGWHGEMDMSIAIRTCVIRENKVYVQAGAGLVADSNPESEWNETQIKARAVIKAVELSSNGLIL.

L-tryptophan-binding positions include serine 49 and 271-273 (PYL). Position 312-313 (312-313 (GT)) interacts with chorismate. Residue glutamate 339 participates in Mg(2+) binding. Residues arginine 447, 461 to 463 (GAG), and glycine 463 contribute to the chorismate site. Glutamate 476 is a binding site for Mg(2+).

It belongs to the anthranilate synthase component I family. Heterotetramer consisting of two non-identical subunits: a beta subunit (TrpG) and a large alpha subunit (TrpE). Requires Mg(2+) as cofactor.

It catalyses the reaction chorismate + L-glutamine = anthranilate + pyruvate + L-glutamate + H(+). It participates in amino-acid biosynthesis; L-tryptophan biosynthesis; L-tryptophan from chorismate: step 1/5. With respect to regulation, feedback inhibited by tryptophan. Functionally, part of a heterotetrameric complex that catalyzes the two-step biosynthesis of anthranilate, an intermediate in the biosynthesis of L-tryptophan. In the first step, the glutamine-binding beta subunit (TrpG) of anthranilate synthase (AS) provides the glutamine amidotransferase activity which generates ammonia as a substrate that, along with chorismate, is used in the second step, catalyzed by the large alpha subunit of AS (TrpE) to produce anthranilate. In the absence of TrpG, TrpE can synthesize anthranilate directly from chorismate and high concentrations of ammonia. This is Anthranilate synthase component 1 (trpE) from Acinetobacter calcoaceticus.